The sequence spans 238 residues: Purine nucleoside phosphorylase DeoD-type (238 aa).

His4 lines the a purine D-ribonucleoside pocket. Residues Gly20, Arg24, Arg43, and 87-90 (RVGS) contribute to the phosphate site. Residues 179-181 (EME) and 203-204 (SD) each bind a purine D-ribonucleoside. Asp204 serves as the catalytic Proton donor.

It belongs to the PNP/UDP phosphorylase family. In terms of assembly, homohexamer; trimer of homodimers.

It catalyses the reaction a purine D-ribonucleoside + phosphate = a purine nucleobase + alpha-D-ribose 1-phosphate. The catalysed reaction is a purine 2'-deoxy-D-ribonucleoside + phosphate = a purine nucleobase + 2-deoxy-alpha-D-ribose 1-phosphate. Catalyzes the reversible phosphorolytic breakdown of the N-glycosidic bond in the beta-(deoxy)ribonucleoside molecules, with the formation of the corresponding free purine bases and pentose-1-phosphate. This Actinobacillus succinogenes (strain ATCC 55618 / DSM 22257 / CCUG 43843 / 130Z) protein is Purine nucleoside phosphorylase DeoD-type.